The sequence spans 1030 residues: F-box/WD repeat-containing protein 10 (1030 aa).

The region spanning 280-329 (RDFIRDLPLHLSKYILRMLDKHSLNRCIFVSQHWATLAQQVKVDQSMHSF) is the F-box domain. WD repeat units follow at residues 466–505 (GHAG…CVRI), 508–547 (GHQG…KTFK), 549–584 (KDPI…LQKT), 587–624 (GHEG…ERCL), and 626–667 (AFKH…KVIK). Positions 709–773 (KNKVKKSKDK…LSSDDMETPV (65 aa)) are disordered. Basic and acidic residues predominate over residues 716–733 (KDKEEEREETSLGDEHSR). Positions 734–749 (STIQGHSLKDSVSSKQ) are enriched in polar residues. Residues 963 to 992 (FMLMTVKEEKEFAEAKMKEYEASVSTKEVD) are a coiled coil.

Probable substrate-recognition component of a SCF (SKP1-CUL1-F-box protein)-type E3 ubiquitin ligase complex which mediates the ubiquitination and subsequent proteasomal degradation of target proteins. Overexpression is leading to degradation of CBX5 and CBX1. The chain is F-box/WD repeat-containing protein 10 (Fbxw10) from Mus musculus (Mouse).